A 315-amino-acid chain; its full sequence is GTP cyclohydrolase MptA (315 aa).

This sequence belongs to the GTP cyclohydrolase IV family. Homodimer. It depends on Fe(2+) as a cofactor.

It catalyses the reaction GTP + H2O = 7,8-dihydroneopterin 2',3'-cyclic phosphate + formate + diphosphate + H(+). Its pathway is cofactor biosynthesis; 5,6,7,8-tetrahydromethanopterin biosynthesis. In terms of biological role, converts GTP to 7,8-dihydro-D-neopterin 2',3'-cyclic phosphate, the first intermediate in the biosynthesis of coenzyme methanopterin. This chain is GTP cyclohydrolase MptA, found in Methanococcus maripaludis (strain C6 / ATCC BAA-1332).